Reading from the N-terminus, the 320-residue chain is Porphobilinogen deaminase (320 aa).

At C241 the chain carries S-(dipyrrolylmethanemethyl)cysteine.

Belongs to the HMBS family. As to quaternary structure, monomer. It depends on dipyrromethane as a cofactor.

It catalyses the reaction 4 porphobilinogen + H2O = hydroxymethylbilane + 4 NH4(+). Its pathway is porphyrin-containing compound metabolism; protoporphyrin-IX biosynthesis; coproporphyrinogen-III from 5-aminolevulinate: step 2/4. Its function is as follows. Tetrapolymerization of the monopyrrole PBG into the hydroxymethylbilane pre-uroporphyrinogen in several discrete steps. The polypeptide is Porphobilinogen deaminase (Thermobifida fusca (strain YX)).